The chain runs to 317 residues: Methionyl-tRNA formyltransferase (317 aa).

A (6S)-5,6,7,8-tetrahydrofolate-binding site is contributed by 110–113; that stretch reads SLLP.

Belongs to the Fmt family.

It catalyses the reaction L-methionyl-tRNA(fMet) + (6R)-10-formyltetrahydrofolate = N-formyl-L-methionyl-tRNA(fMet) + (6S)-5,6,7,8-tetrahydrofolate + H(+). In terms of biological role, attaches a formyl group to the free amino group of methionyl-tRNA(fMet). The formyl group appears to play a dual role in the initiator identity of N-formylmethionyl-tRNA by promoting its recognition by IF2 and preventing the misappropriation of this tRNA by the elongation apparatus. This Bacillus pumilus (strain SAFR-032) protein is Methionyl-tRNA formyltransferase.